An 812-amino-acid chain; its full sequence is Fibroblast growth factor receptor 1 (812 aa).

Positions 1 to 20 are cleaved as a signal peptide; that stretch reads MFSGMSLLLWGVLLGAALSV. Residues 21–371 are Extracellular-facing; it reads ARPPSTLPDE…PALLASPLQL (351 aa). Residues 25–118 form the Ig-like C2-type 1 domain; sequence STLPDEVAPK…YTVLCSVNVS (94 aa). Residues Cys54 and Cys100 are joined by a disulfide bond. Asn76, Asn116, Asn133, Asn223, Asn236, Asn260, Asn292, Asn313, and Asn326 each carry an N-linked (GlcNAc...) asparagine glycan. The segment at 121–153 is disordered; that stretch reads LPSAEDDDEDDDNSSSEEKAAENSKPNRPLWSH. A compositionally biased stretch (acidic residues) spans 124–135; the sequence is AEDDDEDDDNSS. Ig-like C2-type domains are found at residues 154 to 242 and 251 to 353; these read PEKM…YQLD and PILQ…AWLT. Cysteines 174 and 226 form a disulfide. An intrachain disulfide couples Cys273 to Cys337. Residues 372–393 traverse the membrane as a helical segment; it reads EIIIYCTGAAFVSAMVVTIIIF. The Cytoplasmic portion of the chain corresponds to 394–812; it reads KMKHPSKKSD…KYSNGGLKKR (419 aa). Tyr457 carries the phosphotyrosine; by autocatalysis modification. The Protein kinase domain occupies 472–761; sequence LILGKPLGEG…LALSSNQEYL (290 aa). ATP-binding positions include 478–484, Lys508, 556–558, and Asn562; these read LGEGCFG and EYT. 2 positions are modified to phosphotyrosine; by autocatalysis: Tyr577 and Tyr579. The active-site Proton acceptor is the Asp617. The ATP site is built by Arg621 and Asp635. Tyr647, Tyr648, Tyr724, and Tyr760 each carry phosphotyrosine; by autocatalysis. The segment at 784–812 is disordered; the sequence is SGEDSMFSHDPLPDEPCLPKYSNGGLKKR.

It belongs to the protein kinase superfamily. Tyr protein kinase family. Fibroblast growth factor receptor subfamily. In terms of assembly, monomer. Homodimer after ligand binding. Interacts with il17rd. Autophosphorylated. Binding of FGF family members together with heparan sulfate proteoglycan or heparin promotes receptor dimerization and autophosphorylation on tyrosine residues. Autophosphorylation occurs in trans between the two FGFR molecules present in the dimer and proceeds in a highly ordered manner. Phosphotyrosine residues provide docking sites for interacting proteins and so are crucial for FGFR1 function and its regulation. Post-translationally, ubiquitinated. FGFR1 is rapidly ubiquitinated after autophosphorylation, leading to internalization and degradation. In terms of processing, N-glycosylated in the endoplasmic reticulum. The N-glycan chains undergo further maturation to an Endo H-resistant form in the Golgi apparatus.

It is found in the cell membrane. The protein localises to the nucleus. The protein resides in the cytoplasm. It localises to the cytosol. Its subcellular location is the cytoplasmic vesicle. It catalyses the reaction L-tyrosyl-[protein] + ATP = O-phospho-L-tyrosyl-[protein] + ADP + H(+). With respect to regulation, present in an inactive conformation in the absence of bound ligand. Ligand binding leads to dimerization and activation by sequential autophosphorylation on tyrosine residues. Functionally, tyrosine-protein kinase that acts as a cell-surface receptor for fibroblast growth factors and plays an essential role in the regulation of embryonic development, cell proliferation, differentiation and migration. Required for normal mesoderm patterning and normal skeletogenesis. Phosphorylates PLCG1, FRS2, GAB1 and SHB. Ligand binding leads to the activation of several signaling cascades. Activation of PLCG1 leads to the production of the cellular signaling molecules diacylglycerol and inositol-1,4,5-trisphosphate. Phosphorylation of FRS2 triggers recruitment of GRB2, GAB1, PIK3R1 and SOS1, and mediates activation of RAS, MAPK1/ERK2, MAPK3/ERK1 and the MAP kinase signaling pathway, as well as of the AKT1 signaling pathway. Promotes phosphorylation of SHC1, STAT1 and PTPN11/SHP2. In the nucleus, enhances RPS6KA1 and CREB1 activity and contributes to the regulation of transcription. FGFR1 signaling is down-regulated by ubiquitination, internalization and degradation. The polypeptide is Fibroblast growth factor receptor 1 (fgfr1) (Xenopus laevis (African clawed frog)).